Here is a 525-residue protein sequence, read N- to C-terminus: Bifunctional purine biosynthesis protein PurH (525 aa).

One can recognise an MGS-like domain in the interval 1-147; sequence MTKIERALIS…KNWAHVAIVT (147 aa).

It belongs to the PurH family.

The catalysed reaction is (6R)-10-formyltetrahydrofolate + 5-amino-1-(5-phospho-beta-D-ribosyl)imidazole-4-carboxamide = 5-formamido-1-(5-phospho-D-ribosyl)imidazole-4-carboxamide + (6S)-5,6,7,8-tetrahydrofolate. It carries out the reaction IMP + H2O = 5-formamido-1-(5-phospho-D-ribosyl)imidazole-4-carboxamide. The protein operates within purine metabolism; IMP biosynthesis via de novo pathway; 5-formamido-1-(5-phospho-D-ribosyl)imidazole-4-carboxamide from 5-amino-1-(5-phospho-D-ribosyl)imidazole-4-carboxamide (10-formyl THF route): step 1/1. Its pathway is purine metabolism; IMP biosynthesis via de novo pathway; IMP from 5-formamido-1-(5-phospho-D-ribosyl)imidazole-4-carboxamide: step 1/1. The protein is Bifunctional purine biosynthesis protein PurH of Chromobacterium violaceum (strain ATCC 12472 / DSM 30191 / JCM 1249 / CCUG 213 / NBRC 12614 / NCIMB 9131 / NCTC 9757 / MK).